Reading from the N-terminus, the 440-residue chain is GTPase Der (440 aa).

EngA-type G domains follow at residues 4–168 (PIVA…NPED) and 177–352 (IKVA…NQNA). GTP contacts are provided by residues 10 to 17 (GRPNVGKS), 57 to 61 (DTGGI), 120 to 123 (NKVD), 183 to 190 (GKPNVGKS), 230 to 234 (DTAGI), and 295 to 298 (NKWD). The KH-like domain maps to 353 to 437 (MRIPTGALNE…PIRFILREKT (85 aa)).

Belongs to the TRAFAC class TrmE-Era-EngA-EngB-Septin-like GTPase superfamily. EngA (Der) GTPase family. In terms of assembly, associates with the 50S ribosomal subunit.

In terms of biological role, GTPase that plays an essential role in the late steps of ribosome biogenesis. The sequence is that of GTPase Der from Alkaliphilus oremlandii (strain OhILAs) (Clostridium oremlandii (strain OhILAs)).